We begin with the raw amino-acid sequence, 66 residues long: U-scoloptoxin(04)-Ssd2a (66 aa).

A signal peptide spans 1–19 (MKAIYILSVLLLMMLPILS).

Belongs to the scoloptoxin-04 family. In terms of processing, contains 2 disulfide bonds. As to expression, expressed by the venom gland.

The protein resides in the secreted. The sequence is that of U-scoloptoxin(04)-Ssd2a from Scolopendra dehaani (Thai centipede).